The primary structure comprises 668 residues: Metastasis-associated protein MTA2 (668 aa).

A BAH domain is found at 1–144; the sequence is MAANMYRVGD…PVQKTLLADQ (144 aa). A phosphoserine mark is found at serine 52 and serine 54. Positions 145 to 256 constitute an ELM2 domain; sequence GEIRVGCKFQ…KAMSTLVPQG (112 aa). Lysine 152 carries the N6-acetyllysine modification. In terms of domain architecture, SANT spans 263–315; it reads DEMEEWSASEAMLFEEALEKYGKDFNDIRQDFLPWKSLASIVQFYYMWKTTDR. A GATA-type; atypical zinc finger spans residues 367 to 394; it reads CESCHTTQSAQWYAWGPPNMQCRLCASC. A disordered region spans residues 412–437; sequence GAARGTTEPHSRGHLSRPEAQSLSPY. A phosphoserine mark is found at serine 433 and serine 435. At lysine 460 the chain carries N6-acetyllysine. A Glycyl lysine isopeptide (Lys-Gly) (interchain with G-Cter in SUMO2 and SUMO3); alternate cross-link involves residue lysine 492. Lysine 492 participates in a covalent cross-link: Glycyl lysine isopeptide (Lys-Gly) (interchain with G-Cter in SUMO2); alternate. Residue lysine 508 forms a Glycyl lysine isopeptide (Lys-Gly) (interchain with G-Cter in SUMO2) linkage. N6-acetyllysine is present on residues lysine 522 and lysine 531. Position 534 is a phosphothreonine (threonine 534). Glycyl lysine isopeptide (Lys-Gly) (interchain with G-Cter in SUMO2) cross-links involve residues lysine 559 and lysine 595. Disordered regions lie at residues 580–599 and 647–668; these read ASGI…LNPA and PPVP…VLED.

It belongs to the metastasis-associated protein family. In terms of assembly, component of the nucleosome remodeling and deacetylase (NuRD) repressor complex, composed of core proteins MTA1, MTA2, MTA3, RBBP4, RBBP7, HDAC1, HDAC2, MBD2, MBD3, and peripherally associated proteins CDK2AP1, CDK2AP2, GATAD2A, GATAD2B, CHD3, CHD4 and CHD5. The exact stoichiometry of the NuRD complex is unknown, and some subunits such as MBD2 and MBD3, GATAD2A and GATAD2B, and CHD3, CHD4 and CHD5 define mutually exclusive NuRD complexes. Interacts with CHD3. Interacts with CHD4. Interacts with GATAD2A. Interacts with HDAC7. Interacts with MBD3. Interacts with p53/TP53. Interacts with MINT. Interacts with PIMREG. Interacts with NACC2. Interacts with ERCC6. Interacts with PWWP2B. Interacts with transcription factor BCL11A.

The protein resides in the nucleus. May function as a transcriptional coregulator. Acts as a component of the histone deacetylase NuRD complex which participates in the remodeling of chromatin. This chain is Metastasis-associated protein MTA2 (Mta2), found in Mus musculus (Mouse).